The chain runs to 294 residues: Shikimate dehydrogenase (NADP(+)) (294 aa).

Residues 23–25 (SRS) and threonine 76 each bind shikimate. Lysine 80 acts as the Proton acceptor in catalysis. Shikimate contacts are provided by asparagine 101 and aspartate 116. NADP(+) is bound by residues 141–145 (GAGGA) and methionine 233. Tyrosine 235 lines the shikimate pocket. Glycine 256 contacts NADP(+).

The protein belongs to the shikimate dehydrogenase family. As to quaternary structure, homodimer.

The catalysed reaction is shikimate + NADP(+) = 3-dehydroshikimate + NADPH + H(+). Its pathway is metabolic intermediate biosynthesis; chorismate biosynthesis; chorismate from D-erythrose 4-phosphate and phosphoenolpyruvate: step 4/7. Involved in the biosynthesis of the chorismate, which leads to the biosynthesis of aromatic amino acids. Catalyzes the reversible NADPH linked reduction of 3-dehydroshikimate (DHSA) to yield shikimate (SA). This is Shikimate dehydrogenase (NADP(+)) from Methylibium petroleiphilum (strain ATCC BAA-1232 / LMG 22953 / PM1).